The following is a 352-amino-acid chain: Ni-sirohydrochlorin a,c-diamide reductive cyclase complex, component CfbD (352 aa).

This sequence belongs to the NifD/NifK/NifE/NifN family. As to quaternary structure, homodimer or monomer. The Ni-sirohydrochlorin a,c-diamide reductive cyclase complex is composed of a NifH homolog component CfbC and a NifD homolog component CfbD. The cofactor is [4Fe-4S] cluster.

The catalysed reaction is Ni-sirohydrochlorin a,c-diamide + 3 AH2 + ATP + H2O = 15,17(3)-seco-F430-17(3)-acid + 3 A + ADP + phosphate. Involved in the biosynthesis of the unique nickel-containing tetrapyrrole coenzyme F430, the prosthetic group of methyl-coenzyme M reductase (MCR), which plays a key role in methanogenesis and anaerobic methane oxidation. Catalyzes both the six-electron reduction of the tetrahydroporphyrin ring system and the gamma-lactamization of the c-acetamide side chain of Ni-sirohydrochlorin a,c-diamide to yield 15,17(3)-seco-F430-17(3)-acid (seco-F430), the last intermediate in the biosynthesis of the coenzyme F430. The polypeptide is Ni-sirohydrochlorin a,c-diamide reductive cyclase complex, component CfbD (Methanocaldococcus jannaschii (strain ATCC 43067 / DSM 2661 / JAL-1 / JCM 10045 / NBRC 100440) (Methanococcus jannaschii)).